A 503-amino-acid polypeptide reads, in one-letter code: Lactation elevated protein 1 homolog B (503 aa).

The segment at 108 to 155 (LQNQPTSELQDKVGSRETVNICRPDENVSNEKEDQQEESSKPHPPQGY) is disordered. Positions 130–148 (RPDENVSNEKEDQQEESSK) are enriched in basic and acidic residues. 159-166 (GNVGTGKT) serves as a coordination point for ATP.

The protein belongs to the AFG1 ATPase family.

In Danio rerio (Zebrafish), this protein is Lactation elevated protein 1 homolog B (lace1b).